The chain runs to 350 residues: Solute carrier family 35 member E4 (350 aa).

Positions 19–30 (GAAAGGAQAAGP) are enriched in low complexity. Positions 19–42 (GAAAGGAQAAGPPEWPPGSPQALR) are disordered. 8 helical membrane passes run 51–71 (MAAL…KWIF), 73–93 (VHGF…AALA), 110–132 (VLLL…RAVP), 135–155 (LAQL…ALLL), 218–238 (VTLL…AALV), 258–278 (ILLS…LLAL), 279–299 (TSAL…LILS), and 312–332 (YVGI…EFVA). In terms of domain architecture, EamA spans 125-179 (NVGLRAVPLDLAQLVTTTTPLFTLALSALLLGRRHHPLQLAAMGPLCLGAACSLA).

The protein belongs to the TPT transporter family. SLC35E subfamily.

It localises to the membrane. Its function is as follows. Putative transporter. The sequence is that of Solute carrier family 35 member E4 (SLC35E4) from Homo sapiens (Human).